Consider the following 24-residue polypeptide: APKNIVLFGATGMTGQVTLGQALE.

NADP(+) is bound by residues G9, T11, G12, and T14.

This sequence belongs to the BLVRB family. Monomer. In terms of tissue distribution, detected in erythrocytes (at protein level).

The protein resides in the cytoplasm. It carries out the reaction reduced riboflavin + NADP(+) = riboflavin + NADPH + 2 H(+). It catalyses the reaction bilirubin IXbeta + NADP(+) = biliverdin IXbeta + NADPH + H(+). The catalysed reaction is FMNH2 + NAD(+) = FMN + NADH + 2 H(+). The enzyme catalyses FMNH2 + NADP(+) = FMN + NADPH + 2 H(+). It carries out the reaction S-nitroso-CoA + L-cysteinyl-[protein] = S-nitroso-L-cysteinyl-[protein] + CoA. It catalyses the reaction L-cysteinyl-[SCAN] + S-nitroso-CoA = S-nitroso-L-cysteinyl-[SCAN] + CoA. The catalysed reaction is S-nitroso-L-cysteinyl-[SCAN] + L-cysteinyl-[protein] = L-cysteinyl-[SCAN] + S-nitroso-L-cysteinyl-[protein]. Functionally, enzyme that can both act as a NAD(P)H-dependent reductase and a S-nitroso-CoA-dependent nitrosyltransferase. Promotes fetal heme degradation during development. Also expressed in adult tissues, where it acts as a regulator of hematopoiesis, intermediary metabolism (glutaminolysis, glycolysis, TCA cycle and pentose phosphate pathway) and insulin signaling. Has a broad specificity oxidoreductase activity by catalyzing the NAD(P)H-dependent reduction of a variety of flavins, such as riboflavin, FAD or FMN, biliverdins, methemoglobin and PQQ (pyrroloquinoline quinone). Contributes to fetal heme catabolism by catalyzing reduction of biliverdin IXbeta into bilirubin IXbeta in the liver. Biliverdin IXbeta, which constitutes the major heme catabolite in the fetus is not present in adult. Does not reduce bilirubin IXalpha. Can also reduce the complexed Fe(3+) iron to Fe(2+) in the presence of FMN and NADPH. Acts as a protein nitrosyltransferase by catalyzing nitrosylation of cysteine residues of target proteins, such as HMOX2, INSR and IRS1. S-nitroso-CoA-dependent nitrosyltransferase activity is mediated via a 'ping-pong' mechanism: BLVRB first associates with both S-nitroso-CoA and protein substrate, nitric oxide group is then transferred from S-nitroso-CoA to Cys residues of BLVRB and from S-nitroso-BLVRB to the protein substrate. Inhibits insulin signaling by mediating nitrosylation of INSR and IRS1, leading to their inhibition. The protein is Flavin reductase (NADPH) (BLVRB) of Aquarana catesbeiana (American bullfrog).